The sequence spans 365 residues: Peptide chain release factor 2 (365 aa).

Gln249 carries the N5-methylglutamine modification.

It belongs to the prokaryotic/mitochondrial release factor family. Methylated by PrmC. Methylation increases the termination efficiency of RF2.

It is found in the cytoplasm. Functionally, peptide chain release factor 2 directs the termination of translation in response to the peptide chain termination codons UGA and UAA. This Acholeplasma laidlawii (strain PG-8A) protein is Peptide chain release factor 2.